Here is a 504-residue protein sequence, read N- to C-terminus: Signal recognition particle receptor FtsY (504 aa).

2 disordered regions span residues 1–71 and 116–135; these read MFNW…DDYL and ESDQATATEADLPSPETEIT. GTP is bound by residues 308–315, 391–395, and 455–458; these read GVNGAGKT, DTAGR, and TKLD.

The protein belongs to the GTP-binding SRP family. FtsY subfamily. In terms of assembly, part of the signal recognition particle protein translocation system, which is composed of SRP and FtsY.

The protein localises to the cell inner membrane. The protein resides in the cytoplasm. It catalyses the reaction GTP + H2O = GDP + phosphate + H(+). Functionally, involved in targeting and insertion of nascent membrane proteins into the cytoplasmic membrane. Acts as a receptor for the complex formed by the signal recognition particle (SRP) and the ribosome-nascent chain (RNC). This Synechocystis sp. (strain ATCC 27184 / PCC 6803 / Kazusa) protein is Signal recognition particle receptor FtsY.